A 561-amino-acid chain; its full sequence is Arginine--tRNA ligase (561 aa).

A 'HIGH' region motif is present at residues Ala-129–His-139.

This sequence belongs to the class-I aminoacyl-tRNA synthetase family. In terms of assembly, monomer.

It localises to the cytoplasm. The catalysed reaction is tRNA(Arg) + L-arginine + ATP = L-arginyl-tRNA(Arg) + AMP + diphosphate. This is Arginine--tRNA ligase from Bordetella parapertussis (strain 12822 / ATCC BAA-587 / NCTC 13253).